A 246-amino-acid polypeptide reads, in one-letter code: MILQAWRSLQLLYLLEAISLLPCTEALLCYEATASAFRAVSLHNWKWLLLRSMVCNQREGCEETVVFIETGTSKGVLSFKGCSSAFSYPPQISYLVSPPGVSIASYSRVCRSYLCNNLTNLEPFVRLKASQPMSTLPSAKSCPSCVGKHDQECLPSFVTTENCPFAASSCYSSTLKFQAGNLNTTFLIMGCARDSHKLLADFQHIGSIRVTEVINVLDKSEAVSAGHCSQGISWSVLLCLLILLRD.

A signal peptide spans 1–26 (MILQAWRSLQLLYLLEAISLLPCTEA). N-linked (GlcNAc...) asparagine glycosylation is present at Asn117. Residues 142–223 (CPSCVGKHDQ…INVLDKSEAV (82 aa)) form the UPAR/Ly6 domain. Residue Ala225 is the site of GPI-anchor amidated alanine attachment. The propeptide at 226-246 (GHCSQGISWSVLLCLLILLRD) is removed in mature form.

It localises to the cell membrane. The protein is Ly6/PLAUR domain-containing protein 4 (Lypd4) of Mus musculus (Mouse).